Consider the following 138-residue polypeptide: Large ribosomal subunit protein uL16 (138 aa).

Basic residues predominate over residues 1 to 13; it reads MLQPARRKYRKEQ. The disordered stretch occupies residues 1-22; that stretch reads MLQPARRKYRKEQKGRNTGIAT.

This sequence belongs to the universal ribosomal protein uL16 family. As to quaternary structure, part of the 50S ribosomal subunit.

Its function is as follows. Binds 23S rRNA and is also seen to make contacts with the A and possibly P site tRNAs. The protein is Large ribosomal subunit protein uL16 of Delftia acidovorans (strain DSM 14801 / SPH-1).